The following is a 219-amino-acid chain: 2-hydroxy-3-keto-5-methylthiopentenyl-1-phosphate phosphatase (219 aa).

Belongs to the HAD-like hydrolase superfamily. MtnX family.

It carries out the reaction 2-hydroxy-5-methylsulfanyl-3-oxopent-1-enyl phosphate + H2O = 1,2-dihydroxy-5-(methylsulfanyl)pent-1-en-3-one + phosphate. It functions in the pathway amino-acid biosynthesis; L-methionine biosynthesis via salvage pathway; L-methionine from S-methyl-5-thio-alpha-D-ribose 1-phosphate: step 4/6. Its function is as follows. Dephosphorylates 2-hydroxy-3-keto-5-methylthiopentenyl-1-phosphate (HK-MTPenyl-1-P) yielding 1,2-dihydroxy-3-keto-5-methylthiopentene (DHK-MTPene). This chain is 2-hydroxy-3-keto-5-methylthiopentenyl-1-phosphate phosphatase, found in Exiguobacterium sibiricum (strain DSM 17290 / CCUG 55495 / CIP 109462 / JCM 13490 / 255-15).